Consider the following 317-residue polypeptide: Ribose-phosphate pyrophosphokinase (317 aa).

ATP is bound by residues 43 to 45 (DGE) and 102 to 103 (RQ). Residues histidine 136 and aspartate 175 each contribute to the Mg(2+) site. Lysine 198 is a catalytic residue. D-ribose 5-phosphate contacts are provided by residues arginine 200, aspartate 224, and 228–232 (DTAGT).

The protein belongs to the ribose-phosphate pyrophosphokinase family. Class I subfamily. In terms of assembly, homohexamer. Mg(2+) serves as cofactor.

The protein localises to the cytoplasm. The enzyme catalyses D-ribose 5-phosphate + ATP = 5-phospho-alpha-D-ribose 1-diphosphate + AMP + H(+). It functions in the pathway metabolic intermediate biosynthesis; 5-phospho-alpha-D-ribose 1-diphosphate biosynthesis; 5-phospho-alpha-D-ribose 1-diphosphate from D-ribose 5-phosphate (route I): step 1/1. Functionally, involved in the biosynthesis of the central metabolite phospho-alpha-D-ribosyl-1-pyrophosphate (PRPP) via the transfer of pyrophosphoryl group from ATP to 1-hydroxyl of ribose-5-phosphate (Rib-5-P). The sequence is that of Ribose-phosphate pyrophosphokinase from Corynebacterium ammoniagenes (Brevibacterium ammoniagenes).